Consider the following 124-residue polypeptide: Ribonuclease pancreatic (124 aa).

2 residues coordinate substrate: K7 and R10. Residue H12 is the Proton acceptor of the active site. Intrachain disulfides connect C26–C84, C40–C95, C58–C110, and C65–C72. The N-linked (GlcNAc...) asparagine; partial glycan is linked to N34. Residues K41 to T45, K66, and R85 contribute to the substrate site. H119 functions as the Proton donor in the catalytic mechanism.

It belongs to the pancreatic ribonuclease family. As to quaternary structure, monomer. Interacts with and forms tight 1:1 complexes with RNH1. Dimerization of two such complexes may occur. Interaction with RNH1 inhibits this protein. In terms of tissue distribution, pancreas.

The protein resides in the secreted. It carries out the reaction an [RNA] containing cytidine + H2O = an [RNA]-3'-cytidine-3'-phosphate + a 5'-hydroxy-ribonucleotide-3'-[RNA].. The catalysed reaction is an [RNA] containing uridine + H2O = an [RNA]-3'-uridine-3'-phosphate + a 5'-hydroxy-ribonucleotide-3'-[RNA].. Its function is as follows. Endonuclease that catalyzes the cleavage of RNA on the 3' side of pyrimidine nucleotides. Acts on single-stranded and double-stranded RNA. The chain is Ribonuclease pancreatic (RNASE1) from Damaliscus korrigum (Topi).